The sequence spans 251 residues: MSESKLAEQFLDAAIGLLQRVRDEDAEPIAAAGTLIADTVADGGRLFAFGAGHSSLAAQDLVYRAGGLALMNLLAVPGVVGVDVMPATLGSALERVDGLASAVLDSSPVRSGDVLVIISLSGRNALPVEMSMNARALGVKVIGVTSVAYASQTRSRHVSGTYLKDHCDIVLDSRIAVGDAELTLDTIEAPFAPASTVVTTALLQAVMATAAGTLADRGIEPPLLRSGNVDGGHDWNDRVMREYGDRIFYRR.

Residues 36–220 (IADTVADGGR…AGTLADRGIE (185 aa)) form the SIS domain.

This sequence belongs to the UPF0309 family.

This Streptomyces avermitilis (strain ATCC 31267 / DSM 46492 / JCM 5070 / NBRC 14893 / NCIMB 12804 / NRRL 8165 / MA-4680) protein is UPF0309 protein SAV_3856.